A 519-amino-acid chain; its full sequence is Putative ATP-dependent RNA helicase L396 (519 aa).

In terms of domain architecture, Helicase ATP-binding spans 110–258 (IKGMEEGGGG…IINWYMGPIL (149 aa)). 123 to 130 (MGCGSGKT) contacts ATP. The short motif at 211 to 214 (DEVH) is the DEAH box element. The 141-residue stretch at 317 to 457 (YLIQELFDMG…KQKYNIQKYY (141 aa)) folds into the Helicase C-terminal domain.

It belongs to the DEAD box helicase family. DEAH subfamily.

It carries out the reaction ATP + H2O = ADP + phosphate + H(+). The protein is Putative ATP-dependent RNA helicase L396 of Acanthamoeba polyphaga (Amoeba).